Reading from the N-terminus, the 776-residue chain is Protein phosphatase 1 regulatory subunit 21 (776 aa).

3 coiled-coil regions span residues 4–206 (GDLQ…LKTL), 432–466 (RLHD…TTND), and 555–597 (ESRE…KETL).

In terms of assembly, component of the FERRY complex.

The protein localises to the early endosome. In terms of biological role, component of the FERRY complex (Five-subunit Endosomal Rab5 and RNA/ribosome intermediary). The FERRY complex directly interacts with mRNAs and RAB5A, and functions as a RAB5A effector involved in the localization and the distribution of specific mRNAs most likely by mediating their endosomal transport. The complex recruits mRNAs and ribosomes to early endosomes through direct mRNA-interaction. Putative regulator of protein phosphatase 1 (PP1) activity. May play a role in the endosomal sorting process or in endosome maturation pathway. The chain is Protein phosphatase 1 regulatory subunit 21 (ppp1r21) from Xenopus laevis (African clawed frog).